The primary structure comprises 123 residues: Alpha-lactalbumin (123 aa).

In terms of domain architecture, C-type lysozyme spans 1-123 (KQFTKCELSQ…KLEQWLCEKE (123 aa)). 4 disulfides stabilise this stretch: Cys6–Cys120, Cys28–Cys111, Cys61–Cys77, and Cys73–Cys91. An N-linked (GlcNAc...) asparagine glycan is attached at Asn45. Ca(2+) contacts are provided by Lys79, Asp82, Asp84, Asp87, and Asp88.

The protein belongs to the glycosyl hydrolase 22 family. In terms of assembly, lactose synthase (LS) is a heterodimer of a catalytic component, beta1,4-galactosyltransferase (beta4Gal-T1) and a regulatory component, alpha-lactalbumin (LA). In terms of tissue distribution, mammary gland specific. Secreted in milk.

The protein resides in the secreted. In terms of biological role, regulatory subunit of lactose synthase, changes the substrate specificity of galactosyltransferase in the mammary gland making glucose a good acceptor substrate for this enzyme. This enables LS to synthesize lactose, the major carbohydrate component of milk. In other tissues, galactosyltransferase transfers galactose onto the N-acetylglucosamine of the oligosaccharide chains in glycoproteins. The chain is Alpha-lactalbumin (LALBA) from Papio cynocephalus (Yellow baboon).